The chain runs to 341 residues: L-threonine 3-dehydrogenase (341 aa).

Zn(2+) is bound at residue cysteine 38. Catalysis depends on charge relay system residues threonine 40 and histidine 43. 6 residues coordinate Zn(2+): histidine 63, glutamate 64, cysteine 93, cysteine 96, cysteine 99, and cysteine 107. NAD(+)-binding positions include isoleucine 175, aspartate 195, arginine 200, leucine 262–isoleucine 264, and isoleucine 286–tyrosine 287.

This sequence belongs to the zinc-containing alcohol dehydrogenase family. As to quaternary structure, homotetramer. The cofactor is Zn(2+).

The protein resides in the cytoplasm. The enzyme catalyses L-threonine + NAD(+) = (2S)-2-amino-3-oxobutanoate + NADH + H(+). It functions in the pathway amino-acid degradation; L-threonine degradation via oxydo-reductase pathway; glycine from L-threonine: step 1/2. Catalyzes the NAD(+)-dependent oxidation of L-threonine to 2-amino-3-ketobutyrate. In Shewanella baltica (strain OS223), this protein is L-threonine 3-dehydrogenase.